A 286-amino-acid polypeptide reads, in one-letter code: Carbohydrate-binding domain-containing protein Cthe_2159 (286 aa).

Residues 1–20 form the signal peptide; that stretch reads MSIKKLILAASILTTLALTG. A lipid anchor (N-palmitoyl cysteine) is attached at Cys21. A lipid anchor (S-diacylglycerol cysteine) is attached at Cys21. Residues 124–225 form a polygalacturonic acid-binding region; sequence GKDNVLTDAE…GIKVENTEEP (102 aa). Residues Arg152, Asp153, Asp154, Asn177, Asp178, Asp215, Asp243, Asp244, and Asp247 each coordinate Ca(2+).

Monomer.

The protein localises to the cell membrane. Its function is as follows. Binds cellulosic and pectic substrates. Displays no enzyme activity (in vitro). The sequence is that of Carbohydrate-binding domain-containing protein Cthe_2159 from Acetivibrio thermocellus (strain ATCC 27405 / DSM 1237 / JCM 9322 / NBRC 103400 / NCIMB 10682 / NRRL B-4536 / VPI 7372) (Clostridium thermocellum).